Reading from the N-terminus, the 273-residue chain is 3-((Z)-2-isocyanoethenyl)-1H-indole synthase (273 aa).

3 residues coordinate Fe cation: His105, Asp107, and His254.

It belongs to the TfdA dioxygenase family. Fe(2+) is required as a cofactor.

It catalyses the reaction (2S)-3-(1H-indol-3-yl)-2-isocyanopropanoate + 2-oxoglutarate + O2 + H(+) = 3-[(Z)-2-isocyanoethenyl]-1H-indole + succinate + 2 CO2 + H2O. In terms of biological role, involved in the biosynthesis of ambiguines, a family of hapalindole-type alkaloids. Responsible for the synthesis of Z-3-(2-isocyanoethen)-indole, a biosynthetic precursor to all ambiguines. The polypeptide is 3-((Z)-2-isocyanoethenyl)-1H-indole synthase (Fischerella ambigua (strain UTEX 1903)).